The sequence spans 81 residues: ATP synthase subunit c (81 aa).

The next 2 membrane-spanning stretches (helical) occupy residues 6–26 (AAAS…GPGI) and 57–77 (LAFM…LLFA).

Belongs to the ATPase C chain family. As to quaternary structure, F-type ATPases have 2 components, F(1) - the catalytic core - and F(0) - the membrane proton channel. F(1) has five subunits: alpha(3), beta(3), gamma(1), delta(1), epsilon(1). F(0) has four main subunits: a(1), b(1), b'(1) and c(10-14). The alpha and beta chains form an alternating ring which encloses part of the gamma chain. F(1) is attached to F(0) by a central stalk formed by the gamma and epsilon chains, while a peripheral stalk is formed by the delta, b and b' chains.

The protein localises to the cellular thylakoid membrane. Its function is as follows. F(1)F(0) ATP synthase produces ATP from ADP in the presence of a proton or sodium gradient. F-type ATPases consist of two structural domains, F(1) containing the extramembraneous catalytic core and F(0) containing the membrane proton channel, linked together by a central stalk and a peripheral stalk. During catalysis, ATP synthesis in the catalytic domain of F(1) is coupled via a rotary mechanism of the central stalk subunits to proton translocation. In terms of biological role, key component of the F(0) channel; it plays a direct role in translocation across the membrane. A homomeric c-ring of between 10-14 subunits forms the central stalk rotor element with the F(1) delta and epsilon subunits. The chain is ATP synthase subunit c from Picosynechococcus sp. (strain ATCC 27264 / PCC 7002 / PR-6) (Agmenellum quadruplicatum).